The primary structure comprises 126 residues: Ribosome-binding factor A (126 aa).

Belongs to the RbfA family. As to quaternary structure, monomer. Binds 30S ribosomal subunits, but not 50S ribosomal subunits or 70S ribosomes.

The protein resides in the cytoplasm. Its function is as follows. One of several proteins that assist in the late maturation steps of the functional core of the 30S ribosomal subunit. Associates with free 30S ribosomal subunits (but not with 30S subunits that are part of 70S ribosomes or polysomes). Required for efficient processing of 16S rRNA. May interact with the 5'-terminal helix region of 16S rRNA. This chain is Ribosome-binding factor A, found in Halorhodospira halophila (strain DSM 244 / SL1) (Ectothiorhodospira halophila (strain DSM 244 / SL1)).